Consider the following 62-residue polypeptide: Mu-conotoxin Lt5d (62 aa).

Residues 1-22 (MRCLPVFIILLLLIPSAPSVDA) form the signal peptide. A propeptide spanning residues 23 to 48 (QPTTKDDVPLASLHDNAKRALQMFWN) is cleaved from the precursor.

This sequence belongs to the conotoxin T superfamily. In terms of processing, contains 2 disulfide bonds that can be either 'C1-C3, C2-C4' or 'C1-C4, C2-C3', since these disulfide connectivities have been observed for conotoxins with cysteine framework V (for examples, see AC P0DQQ7 and AC P81755). Expressed by the venom duct.

It is found in the secreted. Mu-conotoxins block voltage-gated sodium channels (Nav). This toxin inhibits tetrodotoxin(TTX)-sensitive sodium channels, but does not affect TTX-resistant sodium channels. Reduces the amplitude of currents without changing the activation and inactivation kinetics of currents. The sequence is that of Mu-conotoxin Lt5d from Conus litteratus (Lettered cone).